The chain runs to 264 residues: Virulence plasmid protein pGP3-D (264 aa).

The protein is Virulence plasmid protein pGP3-D of Chlamydia psittaci (Chlamydophila psittaci).